We begin with the raw amino-acid sequence, 355 residues long: Sorbitol dehydrogenase (355 aa).

A2 carries the post-translational modification N-acetylalanine. Residue C43 coordinates Zn(2+). Y49 contributes to the substrate binding site. Zn(2+)-binding residues include H68 and E69. A substrate-binding site is contributed by E154. NAD(+) contacts are provided by residues I182, D202, R207, 271 to 273 (VGL), and 295 to 297 (IFR). Positions 297 and 298 each coordinate substrate.

The protein belongs to the zinc-containing alcohol dehydrogenase family. Homotetramer. Zn(2+) serves as cofactor. In terms of tissue distribution, expressed in liver.

The protein resides in the mitochondrion membrane. Its subcellular location is the cell projection. It localises to the cilium. It is found in the flagellum. It catalyses the reaction keto-D-fructose + NADH + H(+) = D-sorbitol + NAD(+). Its function is as follows. Polyol dehydrogenase that catalyzes the reversible NAD(+)-dependent oxidation of various sugar alcohols. Is active with D-sorbitol (D-glucitol) as substrate, leading to the C2-oxidized product D-fructose. Is a key enzyme in the polyol pathway that interconverts glucose and fructose via sorbitol, which constitutes an important alternate route for glucose metabolism. This Gallus gallus (Chicken) protein is Sorbitol dehydrogenase (SORD).